The primary structure comprises 401 residues: Elongation factor Tu 2 (401 aa).

Positions 10-209 (KPHVNVGTIG…AVDEYIPTPV (200 aa)) constitute a tr-type G domain. Residues 19-26 (GHVDHGKT) form a G1 region. 19 to 26 (GHVDHGKT) contacts GTP. Mg(2+) is bound at residue Thr-26. Residues 60–64 (GITIA) form a G2 region. The tract at residues 81–84 (DCPG) is G3. GTP is bound by residues 81–85 (DCPGH) and 136–139 (NKVD). A G4 region spans residues 136–139 (NKVD). A G5 region spans residues 174 to 176 (SAL).

Belongs to the TRAFAC class translation factor GTPase superfamily. Classic translation factor GTPase family. EF-Tu/EF-1A subfamily. As to quaternary structure, monomer.

Its subcellular location is the cytoplasm. It carries out the reaction GTP + H2O = GDP + phosphate + H(+). In terms of biological role, GTP hydrolase that promotes the GTP-dependent binding of aminoacyl-tRNA to the A-site of ribosomes during protein biosynthesis. The sequence is that of Elongation factor Tu 2 from Roseiflexus castenholzii (strain DSM 13941 / HLO8).